The primary structure comprises 590 residues: Oleate hydratase (590 aa).

FAD-binding residues include alanine 33, glutamate 56, serine 64, and glutamate 82. The Proton acceptor role is filled by glutamate 82. Residue tyrosine 200 is the Proton donor of the active site. Residues valine 249, serine 291, threonine 508, and serine 512 each coordinate FAD.

Belongs to the oleate hydratase family. In terms of assembly, monomer and homodimer. Both forms seem to be active. Requires FAD as cofactor.

The enzyme catalyses (R)-10-hydroxyoctadecanoate = (9Z)-octadecenoate + H2O. It catalyses the reaction (9Z)-octadecenoate + H2O = 10-hydroxyoctadecanoate. It carries out the reaction (9Z)-hexadecenoate + H2O = 10-hydroxyhexadecanoate. The catalysed reaction is (9Z,12Z)-octadecadienoate + H2O = (12Z)-10-hydroxyoctadecenoate. The enzyme catalyses (12Z)-10-hydroxyoctadecenoate + H2O = 10,13-dihydroxyoctadecanoate. It catalyses the reaction (9Z,12Z,15Z)-octadecatrienoate + H2O = (12Z,15Z)-10-hydroxyoctadecadienoate. It participates in lipid metabolism; fatty acid metabolism. Its function is as follows. Catalyzes the hydration of oleate at its cis-9-double bond to yield 10-hydroxyoctadecanoate, probably in the (R) configuration, and of linoleate at its cis-9- and cis-12-double bond to yield 10-hydroxy-12-octadecenoate and 10,13-dihydroxyoctadecanoate. Is not active on trans-double bonds and esterified fatty acids as substrate; is only active on cis-9- and/or cis-12-double bond of C16 and C18 fatty acids without any trans-configurations, producing 10-hydroxy and 10,13-dihydroxy derivatives. Appears to play a role in oleic acid detoxification and bacterial virulence. This chain is Oleate hydratase (sph), found in Streptococcus pyogenes serotype M49 (strain NZ131).